The sequence spans 323 residues: Serine racemase (323 aa).

The ATP site is built by serine 32, serine 33, and lysine 52. Lysine 57 acts as the Proton acceptor in catalysis. A Lysino-D-alanine (Lys); alternate modification is found at lysine 57. The residue at position 57 (lysine 57) is an N6-(pyridoxal phosphate)lysine; alternate. Threonine 79 is a binding site for Ca(2+). Residue serine 82 is the Proton acceptor of the active site. Asparagine 84 serves as a coordination point for pyridoxal 5'-phosphate. Glutamine 87 and tyrosine 119 together coordinate ATP. Residue aspartate 176 participates in Mg(2+) binding. Residues glycine 183, glycine 184, glycine 185, glycine 186, and leucine 187 each contribute to the pyridoxal 5'-phosphate site. Ca(2+) contacts are provided by glutamate 208, glycine 212, and aspartate 214. Mg(2+) is bound by residues glutamate 208, glycine 212, and aspartate 214. Glutamate 208, glycine 212, and aspartate 214 together coordinate Mn(2+). Residue lysine 277 coordinates ATP. Serine 308 serves as a coordination point for pyridoxal 5'-phosphate. Residue asparagine 311 coordinates ATP.

Belongs to the serine/threonine dehydratase family. In terms of assembly, homodimer. The cofactor is Mg(2+). Requires Mn(2+) as cofactor. Ca(2+) serves as cofactor. Pyridoxal 5'-phosphate is required as a cofactor. In terms of processing, modification of the active site Lys by its substrate Ser to lysino-D-alanine reduces but does not abolish enzyme activity.

It carries out the reaction L-serine = D-serine. The catalysed reaction is L-serine = pyruvate + NH4(+). It catalyses the reaction D-serine = pyruvate + NH4(+). Its activity is regulated as follows. Allosterically activated by ATP, by magnesium, and possibly also by other divalent metal cations. Its function is as follows. Catalyzes the synthesis of D-serine from L-serine. Has dehydratase activity towards both L-serine and D-serine. This chain is Serine racemase, found in Schizosaccharomyces pombe (strain 972 / ATCC 24843) (Fission yeast).